The following is a 390-amino-acid chain: Chorismate synthase 1 (390 aa).

The NADP(+) site is built by Arg-39 and Arg-45. The tract at residues 95 to 117 (EQEEKEMKRKVTKPRPGHADLNG) is disordered. FMN contacts are provided by residues 132-134 (RSS), 253-254 (NA), Gly-298, 313-317 (KPIPT), and Arg-339.

Belongs to the chorismate synthase family. In terms of assembly, homotetramer. FMNH2 is required as a cofactor.

It catalyses the reaction 5-O-(1-carboxyvinyl)-3-phosphoshikimate = chorismate + phosphate. The protein operates within metabolic intermediate biosynthesis; chorismate biosynthesis; chorismate from D-erythrose 4-phosphate and phosphoenolpyruvate: step 7/7. Catalyzes the anti-1,4-elimination of the C-3 phosphate and the C-6 proR hydrogen from 5-enolpyruvylshikimate-3-phosphate (EPSP) to yield chorismate, which is the branch point compound that serves as the starting substrate for the three terminal pathways of aromatic amino acid biosynthesis. This reaction introduces a second double bond into the aromatic ring system. This Bacillus thuringiensis (strain Al Hakam) protein is Chorismate synthase 1.